The primary structure comprises 274 residues: Glucosamine-6-phosphate deaminase (274 aa).

Catalysis depends on Asp-72, which acts as the Proton acceptor; for enolization step. The active-site For ring-opening step is Asp-141. His-143 functions as the Proton acceptor; for ring-opening step in the catalytic mechanism. Catalysis depends on Glu-148, which acts as the For ring-opening step.

Belongs to the glucosamine/galactosamine-6-phosphate isomerase family. Homohexamer.

Its subcellular location is the cytoplasm. It catalyses the reaction alpha-D-glucosamine 6-phosphate + H2O = beta-D-fructose 6-phosphate + NH4(+). The protein operates within nucleotide-sugar biosynthesis; UDP-N-acetyl-alpha-D-glucosamine biosynthesis; alpha-D-glucosamine 6-phosphate from D-fructose 6-phosphate: step 1/1. In terms of biological role, catalyzes the reversible conversion of alpha-D-glucosamine 6-phosphate (GlcN-6P) into beta-D-fructose 6-phosphate (Fru-6P) and ammonium ion, a regulatory reaction step in de novo uridine diphosphate-N-acetyl-alpha-D-glucosamine (UDP-GlcNAc) biosynthesis via hexosamine pathway. This Drosophila pseudoobscura pseudoobscura (Fruit fly) protein is Glucosamine-6-phosphate deaminase.